Reading from the N-terminus, the 211-residue chain is MGLVFLGPPGSGKGTISKIISNEFKYQHISTGDLFRENILNSTALGQEIKKIVERGELVPDLITIKIVEDKIKAIKKNKDFILDGFPRNICQAEALDKFLPNVKIINFLIDEELVIKRLSGRRICKSCNNIFNIYTLTTKKNGICDVCGGDLYQREDDKEECLKTRLKEYKLQTKPLIEFYSKCSRLNNVDASVKIDEIKKKIIKIMLKKN.

10–15 (GSGKGT) is a binding site for ATP. The tract at residues 30 to 59 (STGDLFRENILNSTALGQEIKKIVERGELV) is NMP. Residues Thr-31, Arg-36, 57–59 (ELV), 85–88 (GFPR), and Gln-92 each bind AMP. An LID region spans residues 121–158 (GRRICKSCNNIFNIYTLTTKKNGICDVCGGDLYQREDD). Arg-122 contacts ATP. Residues Cys-125 and Cys-128 each coordinate Zn(2+). 131 to 132 (IF) is an ATP binding site. Zn(2+)-binding residues include Cys-145 and Cys-148. The AMP site is built by Arg-155 and Arg-166. ATP is bound at residue Val-194.

This sequence belongs to the adenylate kinase family. Monomer.

It localises to the cytoplasm. It carries out the reaction AMP + ATP = 2 ADP. It functions in the pathway purine metabolism; AMP biosynthesis via salvage pathway; AMP from ADP: step 1/1. Functionally, catalyzes the reversible transfer of the terminal phosphate group between ATP and AMP. Plays an important role in cellular energy homeostasis and in adenine nucleotide metabolism. This Borreliella burgdorferi (strain ATCC 35210 / DSM 4680 / CIP 102532 / B31) (Borrelia burgdorferi) protein is Adenylate kinase.